A 525-amino-acid polypeptide reads, in one-letter code: PTSPLVFVPSSPRLSPFMHPPSHHYLETTSTPVYRSSVSSSQQQLSREDQCGTSDDSYSVGESGAGAGAGAGGFEMAKEMRFCAVCSDYASGYDYGVWSCEGCKAFFKRSIQGHNDYMCPATNQCTIDRNRRKSCQACRLRKCYQVGMMKGGVRKDRGRVLRRDKRRTGTSDKASKDLEHRTAPPQDRRKHSSSSSSAGGGGKSSIIGMSPDQVLLLLQGAEPPVLCSRQKLSRPYTEVTMMTLLTSMADKELVHMIAWAKKLPGFLQLSLHDQVQLLESSWLEVLMIGLIWRSIHCPGKLIFAQDLILDRSEGDCVEGMAEIFDMLLATTSRFRMLKLKTEEFVCLKAIILLNSGAFSFCTGTMEPLHDGAAVQNMLDTITDALIHHISQSGCSAQQQSRRQAHLLLLLSHIRHMSNKGMEHLYSMKCKNKVPLYDLLLEMLDAHRIHRPDRPAESWSQADREPPYTTSNNNNSSSSSGGGDGGPSSAGSGSGPRVNHESLSRAPTGPGVLQYGGPRSDCTHIL.

Positions 1-59 (PTSPLVFVPSSPRLSPFMHPPSHHYLETTSTPVYRSSVSSSQQQLSREDQCGTSDDSYS) are disordered. The modulating stretch occupies residues 1-82 (PTSPLVFVPS…GFEMAKEMRF (82 aa)). The span at 36 to 45 (SSVSSSQQQL) shows a compositional bias: low complexity. 2 consecutive NR C4-type zinc fingers follow at residues 83–103 (CAVC…CEGC) and 119–143 (CPAT…LRKC). The nuclear receptor DNA-binding region spans 83–148 (CAVCSDYASG…RLRKCYQVGM (66 aa)). The tract at residues 149–209 (MKGGVRKDRG…GGGKSSIIGM (61 aa)) is hinge. Residues 154 to 182 (RKDRGRVLRRDKRRTGTSDKASKDLEHRT) are compositionally biased toward basic and acidic residues. The interval 154–203 (RKDRGRVLRRDKRRTGTSDKASKDLEHRTAPPQDRRKHSSSSSSAGGGGK) is disordered. The NR LBD domain occupies 210–446 (SPDQVLLLLQ…DLLLEMLDAH (237 aa)). Residues 452-465 (DRPAESWSQADREP) are compositionally biased toward basic and acidic residues. Residues 452–525 (DRPAESWSQA…GPRSDCTHIL (74 aa)) are disordered. A compositionally biased stretch (gly residues) spans 479 to 493 (SGGGDGGPSSAGSGS).

It belongs to the nuclear hormone receptor family. NR3 subfamily. As to quaternary structure, binds DNA as a homodimer. Can form a heterodimer with ER-beta. In terms of tissue distribution, abundant in the liver, less abundant in the testes and barely detectable in the ovary and brain.

The protein resides in the nucleus. Functionally, the steroid hormones and their receptors are involved in the regulation of eukaryotic gene expression and affect cellular proliferation and differentiation in target tissues. The sequence is that of Estrogen receptor (esr1) from Micropogonias undulatus (Atlantic croaker).